The sequence spans 151 residues: Phosphopantetheine adenylyltransferase (151 aa).

Residue serine 9 participates in substrate binding. Residues 9 to 10 (SF) and histidine 17 each bind ATP. Substrate-binding residues include lysine 41, threonine 73, and arginine 87. ATP contacts are provided by residues 88–90 (GLR), glutamate 98, and 122–128 (TSFISSS).

This sequence belongs to the bacterial CoaD family. Homohexamer. The cofactor is Mg(2+).

It localises to the cytoplasm. The enzyme catalyses (R)-4'-phosphopantetheine + ATP + H(+) = 3'-dephospho-CoA + diphosphate. It functions in the pathway cofactor biosynthesis; coenzyme A biosynthesis; CoA from (R)-pantothenate: step 4/5. In terms of biological role, reversibly transfers an adenylyl group from ATP to 4'-phosphopantetheine, yielding dephospho-CoA (dPCoA) and pyrophosphate. The chain is Phosphopantetheine adenylyltransferase from Flavobacterium psychrophilum (strain ATCC 49511 / DSM 21280 / CIP 103535 / JIP02/86).